A 205-amino-acid chain; its full sequence is Holliday junction resolvase RecU (205 aa).

Positions 83, 85, 98, and 117 each coordinate Mg(2+).

It belongs to the RecU family. The cofactor is Mg(2+).

It is found in the cytoplasm. The catalysed reaction is Endonucleolytic cleavage at a junction such as a reciprocal single-stranded crossover between two homologous DNA duplexes (Holliday junction).. Endonuclease that resolves Holliday junction intermediates in genetic recombination. Cleaves mobile four-strand junctions by introducing symmetrical nicks in paired strands. Promotes annealing of linear ssDNA with homologous dsDNA. Required for DNA repair, homologous recombination and chromosome segregation. In Streptococcus suis (strain 98HAH33), this protein is Holliday junction resolvase RecU.